Here is a 435-residue protein sequence, read N- to C-terminus: FAD-dependent monooxygenase ATEG_07662 (435 aa).

Residues 8-28 (PLDVAIIGGGIIGIMTALGLL) form a helical membrane-spanning segment. The FAD site is built by glutamate 38, alanine 51, and arginine 119. A glycan (N-linked (GlcNAc...) asparagine) is linked at asparagine 191. The active site involves arginine 201. Residues aspartate 317 and alanine 330 each contribute to the FAD site.

Belongs to the paxM FAD-dependent monooxygenase family. FAD serves as cofactor.

Its subcellular location is the membrane. It participates in secondary metabolite biosynthesis. In terms of biological role, FAD-dependent monooxygenase; part of the cluster B that mediates the biosynthesis of azasperpyranones, members of the azaphilone family that exhibit anti-cancer activities. Azasperpyranones are synthesized by 2 clusters, A and B. Cluster A is responsible for the production of the polyhydric phenol moiety while the azaphilonoid scaffold is produced by the cluster B. The non-reducing polyketide synthase ATEG_03629 produces 5-methyl orsellinic acid, which is then reduced to 5-methyl orsellinic aldehyde by the NRPS-like protein ATEG_03630. 5-methyl orsellinic aldehyde is then first hydroxylated by the FAD-dependent monooxygenase ATEG_03635 and subsequently hydroxylated by the cytochrome P450 monooxygenase ATEG_03631 to produce the unstable polyhydric phenol precursor of azasperpyranones. On the other hand, the polyketide synthase ATEG_07659 is responsible for producing the 3,5-dimethyloctadienone moiety from acetyl-CoA, three malonyl-CoA, and two S-adenosyl methionines (SAM). The 3,5-dimethyloctadienone moiety is then loaded onto the SAT domain of ATEG_07661 and extended with four malonyl-CoA and one SAM, which leads to the formation of 2,4-dihydroxy-6-(5,7-dimethyl-2-oxo-trans-3-trans-5-nonadienyl)-3-methylbenzaldehyde (compound 8) after reductive release and aldol condensation. The FAD-dependent monooxygenase ATEG_07662 is the next enzyme in the biosynthesis sequence and hydroxylates the side chain at the benzylic position of compound 8. In Aspergillus nidulans, afoF, the ortholog of the FAD-dependent oxygenase ATEG_07660, is the key enzyme for the biosynthesis of asperfuranone by catalyzing the hydroxylation at C-8 of to prevent the formation of a six-membered ring hemiacetal intermediate and thus facilitating the formation of a five-membered ring to produce asperfuranone. In Aspergillus terreus, ATEG_07660 is probably not functional, which leads to the formation of the six-membered ring hemiacetal intermediate presperpyranone instead of asperfuranone. Finally, ATEG_03636 is involved in the condensation of the polyhydric phenol moiety produced by cluster A and the perasperpyranone precursor produced by cluster B, to yield azasperpyranone A. Further modifications of azasperpyranone A result in the production of derivatives, including azasperpyranone B to F. The sequence is that of FAD-dependent monooxygenase ATEG_07662 from Aspergillus terreus (strain NIH 2624 / FGSC A1156).